Reading from the N-terminus, the 65-residue chain is uncharacterized protein (65 aa).

The Nucleophile role is filled by cysteine 9. Arginine 15 is an active-site residue.

This sequence belongs to the low molecular weight phosphotyrosine protein phosphatase family.

This is an uncharacterized protein from Synechococcus sp. (strain WH8020).